The chain runs to 651 residues: Acetyl-coenzyme A synthetase (651 aa).

Residues 189-192, Thr-311, and Asn-335 each bind CoA; that span reads RGGK. ATP is bound by residues 387 to 389, 411 to 416, Asp-500, and Arg-515; these read GEP and DTWWQT. CoA is bound at residue Ser-523. Position 526 (Arg-526) interacts with ATP. Positions 537, 539, and 542 each coordinate Mg(2+). Residue Arg-584 coordinates CoA. At Lys-609 the chain carries N6-acetyllysine.

Belongs to the ATP-dependent AMP-binding enzyme family. Mg(2+) is required as a cofactor. Acetylated. Deacetylation by the SIR2-homolog deacetylase activates the enzyme.

It carries out the reaction acetate + ATP + CoA = acetyl-CoA + AMP + diphosphate. Functionally, catalyzes the conversion of acetate into acetyl-CoA (AcCoA), an essential intermediate at the junction of anabolic and catabolic pathways. AcsA undergoes a two-step reaction. In the first half reaction, AcsA combines acetate with ATP to form acetyl-adenylate (AcAMP) intermediate. In the second half reaction, it can then transfer the acetyl group from AcAMP to the sulfhydryl group of CoA, forming the product AcCoA. The protein is Acetyl-coenzyme A synthetase of Rhizobium leguminosarum bv. trifolii (strain WSM2304).